We begin with the raw amino-acid sequence, 2258 residues long: MEEFIPEVFYQNQVQSLKKILKSWKRDTSIYAYLAREQEVLAFLVLSPAHIAKLNKLLTEESARCALLAQNCETIEALAVVRQALQGVTLHFGDNGMEKGWLHMMKALDACLDESFSENAAALKKSIQAVGHKLIAAKNRIESCERSVNHLTTFQFAREYGLSTTYFEKLSNFGGHIRSFVWSSDSGEIFPKPKRSSRTKRISTFTSYYWGEFWCNCIWLLCSLWSPARWCFNSVVFIWSLCGVLNLSMVVLQFTLKRHFGRYYFRYVMSGVLAICAVCCVHLKNRKGPILQASQKDKRFIGILAFCITVIYMFDVDLADSLSNNLHKISRLVNLFLDDNRGFATPALDNLTDFTTILQSGTSSDDLKIVQDTLAVVLQVDDEDATQDDAIYDSDGLQTFKQWVSHNQLAGMQLARPLQYPCSTTYGLTADNVAELATSMAQEAKQWSQVVGHTGSGKSTRLPTAYANCLKGLAGRKKNVLVCEPTRAATVNVTSGISQNFGRLVYGRHEGWSNLGDKTIQVMTYGSALAAWKVDNKFLSQFDAVFLDESHLITTHALVFESICQEVTNVRKFYVSATPRDGKKCPEAVRRYEIKTVKSECSSVDTFVRSQDKENSLYVLQHETVLVFLAGKAECDRAASNWNKLYSTNMYAYSLTGDNFTVAYENIVTRMLTDRIIVFCTNILETGVTLNVDCVVDFGFTMRPELDLVDKSLTLMRRRVTENERAQRIGRAGRLRTGHAICIGNPETRHDLVPPETLYEAALLSFVHGVQFYINEHFENAWIEGVTKSQASVMTQFKLSPFLMRDIVRDDGAIPLSLHKILKNYTHRNTDLIGTKLSVMSHVYNSWPLYRTVHQSIFRGDSNVPQALKHARVPFNVSTAHDFPWENFAQACLEFQPRVLQVFSDSSSTSRIINLQIGKMHIVNSMEEVKININSYQRSAENLRSVKDSFESSIFRTKLLRGNPTGKITKRIETLLDNVRVLQQVHAKLEIIAYSGGEKLNMDKKSVDELNEIVELQSKNSLTAEELARILHLTKPTSTFFNLFAERGRQMLVTLLVMVAASLMYLVFWVSPRKQDDITIEGKGRAYNRDKRMGYDSYEEDEVRHKINKKFKERSTRFSNDSKPETSSKYRNLKQEFVNFYDLKTDANVLQAVFTAMDGAVLLQTEAPMADIDRVNRLLNDHFEDSESQAAHEGLNTMVKCHLTMKDGRQFELDMEQHDPETIAKLGGEVGFRMNRYDLRQVGATRYINPKAQTSAATLEGMTMKPMSAFTIDSAKMVGFIKTAKDTLNCILYGDWIIAPAHIQQGEGDITFIFQHTQFTTTTERLASYGIRQFKGLDLVVIRRPQQIRAVKKDMRASILDTPTEVQMLYLSTKGGKYQVSTSAVCFPHYNNRWGHVISTAEGMCGCIVFNPTTNHIVGIHVSYNDTRRRNEFQAFTSDVLTTINAPGHEIPFSPWVFDWKFCGYTTKPRNMQSAPSTLERLNINATGFGFKLNAQGIKPAMLRSTETFSREFPNTQFKLIGEVKKGLIDKHTITGENPYFLEFLNTFKPYQWVQAFMDEYAPSILAYDAYFKDLKKYDRPPHASVFCEDTLTKAKHKMIKILEEAGMGRTLVRTTEQVLLDMAWTTSGGPLYHGKKIDIVQHLSDDELVQFSEACQQALITGTLDGVWNGSLKAELRSSQKILERKTRVFTAAPITSLIAMKYYVDDFNKQFYKTHLKAPHTVGINKFNRGWQNLYEKLNKPGWTHGSGDGSRFDSSIDGFLFDVIKDIRKHFMDAEHHKQLDTIYEEIVNTKICLANGLVIQKNCGNNSGQPSTVVDNTLALMTSFLYAYARLTGDDTFELMDENFVFVCNGDDNKFAMSPSFMVKFGCDFSPFLSELGLTYEFDEATEDICENPYMSLTMVRTSFGIGFSLSIERIVAILQWSRAGGVLHAYLSGIAALFESFNTPKLFNLVHTYLLWLVTEHEEELFSMMELKDMFMPLPTKEQIALLHYVGTEPIMEETYLQSGKDDPDPIVPPVSDTDLTNMAAAPPDNRRSRAVVPRGTSDWNLPEPKMRMLGFKSKINIETLADVPEGYMNTFASVATETQRRKWEEATRGDFGITDNEKWEKLLIAACIYFADNGTSPNFDEELTMEVNGGLNSIKEYPVRPFVVRAKKISTLRRIFRCYSIETKLMFVKLRRVPQWAIKHGCLDEIVFDFMIPDQFTSRTALETLKQTKLAAIGVGTSNSLLTSEQTNMRTTETRRRNDYDGHEALLR.

Residues 439–597 (SMAQEAKQWS…AVRRYEIKTV (159 aa)) form the Helicase ATP-binding domain. 487–494 (RAATVNVT) contacts ATP. The Helicase C-terminal domain maps to 612–778 (DKENSLYVLQ…GVQFYINEHF (167 aa)). Tyr1141 is modified (O-(5'-phospho-RNA)-tyrosine). In terms of domain architecture, Peptidase C4 spans 1257–1476 (ATLEGMTMKP…TKPRNMQSAP (220 aa)). Catalysis depends on for nuclear inclusion protein A activity residues His1302, Asp1338, and Cys1405. In terms of domain architecture, RdRp catalytic spans 1745–1869 (WTHGSGDGSR…AMSPSFMVKF (125 aa)). Disordered regions lie at residues 2027 to 2047 (NMAA…RGTS) and 2233 to 2258 (TSEQ…ALLR). Positions 2242–2258 (TETRRRNDYDGHEALLR) are enriched in basic and acidic residues.

This sequence belongs to the bymoviruses polyprotein 1 family. In terms of processing, VPg is uridylylated by the polymerase and is covalently attached to the 5'-end of the genomic RNA. This uridylylated form acts as a nucleotide-peptide primer for the polymerase. Post-translationally, the viral RNA1 of bymoviruses is expressed as a single polyprotein which undergoes post-translational proteolytic processing by the main proteinase NIa-pro resulting in the production of at least eight individual proteins.

It localises to the host cytoplasmic vesicle. The protein resides in the virion. The catalysed reaction is RNA(n) + a ribonucleoside 5'-triphosphate = RNA(n+1) + diphosphate. It catalyses the reaction Hydrolyzes glutaminyl bonds, and activity is further restricted by preferences for the amino acids in P6 - P1' that vary with the species of potyvirus, e.g. Glu-Xaa-Xaa-Tyr-Xaa-Gln-|-(Ser or Gly) for the enzyme from tobacco etch virus. The natural substrate is the viral polyprotein, but other proteins and oligopeptides containing the appropriate consensus sequence are also cleaved.. Indispensable for virus replication. Its function is as follows. Mediates the cap-independent, EIF4E-dependent translation of viral genomic RNAs. Binds to the cap-binding site of host EIF4E and thus interferes with the host EIF4E-dependent mRNA export and translation. VPg-RNA directly binds EIF4E and is a template for transcription. Also forms trimeric complexes with EIF4E-EIF4G, which are templates for translation. Functionally, has RNA-binding and proteolytic activities. In terms of biological role, an RNA-dependent RNA polymerase that plays an essential role in the virus replication. The polypeptide is Genome polyprotein 1 (Barley mild mosaic virus (strain Na1) (BaMMV)).